Reading from the N-terminus, the 229-residue chain is Triosephosphate isomerase (229 aa).

9-11 (NYK) lines the substrate pocket. The active-site Electrophile is His-93. Glu-141 serves as the catalytic Proton acceptor. Substrate contacts are provided by residues Ile-146, Gly-180, and 201-202 (AS).

It belongs to the triosephosphate isomerase family. In terms of assembly, homotetramer; dimer of dimers.

The protein resides in the cytoplasm. The enzyme catalyses D-glyceraldehyde 3-phosphate = dihydroxyacetone phosphate. The protein operates within carbohydrate biosynthesis; gluconeogenesis. It functions in the pathway carbohydrate degradation; glycolysis; D-glyceraldehyde 3-phosphate from glycerone phosphate: step 1/1. Functionally, involved in the gluconeogenesis. Catalyzes stereospecifically the conversion of dihydroxyacetone phosphate (DHAP) to D-glyceraldehyde-3-phosphate (G3P). The protein is Triosephosphate isomerase of Sulfurisphaera tokodaii (strain DSM 16993 / JCM 10545 / NBRC 100140 / 7) (Sulfolobus tokodaii).